Reading from the N-terminus, the 60-residue chain is Potassium channel toxin alpha-KTx 12.7 (60 aa).

The N-terminal stretch at 1 to 22 (MSNMPVLIITLLLFSMYISTAA) is a signal peptide. Cystine bridges form between Cys-30-Cys-51, Cys-36-Cys-56, and Cys-40-Cys-58.

This sequence belongs to the short scorpion toxin superfamily. Potassium channel inhibitor family. Alpha-KTx 12 subfamily. Expressed by the venom gland.

Its subcellular location is the secreted. Inhibits voltage-gated potassium channels. This chain is Potassium channel toxin alpha-KTx 12.7, found in Lychas mucronatus (Chinese swimming scorpion).